Consider the following 244-residue polypeptide: MGLELFLDLVSQPSRAVYIFAKKNGIPLELRTVDLVKGQHKSKEFLQINSLGKLPTLKDGDFILTESSAILIYLSCKYQTPDHWYPSDLQARARVHEYLGWHADCIRGTFGIPLWVQVLGPLIGVQVPEEKVERNRTAMDQALQWLEDKFLGDRPFLAGQQVTLADLMALEELMQPVALGYELFEGRPRLAAWRGRVEAFLGAELCQEAHSIILSILEQAAKKTLPTPSPEAYQAMLLRIARIP.

In terms of domain architecture, GST N-terminal spans 2–82; the sequence is GLELFLDLVS…YLSCKYQTPD (81 aa). Glutathione-binding positions include 40 to 41, 53 to 54, 66 to 67, and 104 to 107; these read HK, KL, ES, and DCIR. In terms of domain architecture, GST C-terminal spans 88-224; sequence DLQARARVHE…SILEQAAKKT (137 aa).

The protein belongs to the GST superfamily. Theta family. In terms of assembly, homodimer. As to expression, expressed at low levels in liver. In lung, expressed at low levels in ciliated bronchiolar cells, alveolar macrophages and alveolar type II cells.

It is found in the cytoplasm. The protein localises to the cytosol. It catalyses the reaction RX + glutathione = an S-substituted glutathione + a halide anion + H(+). Conjugation of reduced glutathione to a wide number of exogenous and endogenous hydrophobic electrophiles. Has a sulfatase activity. The sequence is that of Glutathione S-transferase theta-2B (GSTT2B) from Homo sapiens (Human).